A 487-amino-acid chain; its full sequence is Protein NEN2 (487 aa).

The 162-residue stretch at 18 to 179 (FFDVETTIPF…LDDVRMNFEV (162 aa)) folds into the Exonuclease domain. Residues Asp20 and Glu22 each contribute to the Mg(2+) site. Catalysis depends on His167, which acts as the Proton donor/acceptor. Asp172 is a Mg(2+) binding site. 2 disordered regions span residues 200 to 233 (NSVT…TGEN) and 269 to 291 (SDVP…GTGD). Polar residues predominate over residues 221–233 (PLQSPTDQQTGEN).

Mg(2+) serves as cofactor. As to expression, expressed in the sieve elements and phloem pole pericycle cells.

The protein resides in the cytoplasm. Its subcellular location is the nucleus. Its function is as follows. Probable exonuclease involved in enuclation of sieve elements. The protein is Protein NEN2 of Arabidopsis thaliana (Mouse-ear cress).